The chain runs to 182 residues: MVELQELYKKTITPALQKEFGFKSVMAVPRLEKITLNMGLGEAVADKKVIERAMDDMIKISGQKPLITYARKSEAGFKIRAGWPIGCKVTLRRDRMYEFLKRLISIAIPRIRDFRGLSPKSFDGRGNYSLGIREQIVFPEIQYDKVDAIRGMDITITTTARTDEEGRALLKAFGFPLKDESR.

It belongs to the universal ribosomal protein uL5 family. As to quaternary structure, part of the 50S ribosomal subunit; part of the 5S rRNA/L5/L18/L25 subcomplex. Contacts the 5S rRNA and the P site tRNA. Forms a bridge to the 30S subunit in the 70S ribosome.

In terms of biological role, this is one of the proteins that bind and probably mediate the attachment of the 5S RNA into the large ribosomal subunit, where it forms part of the central protuberance. In the 70S ribosome it contacts protein S13 of the 30S subunit (bridge B1b), connecting the 2 subunits; this bridge is implicated in subunit movement. Contacts the P site tRNA; the 5S rRNA and some of its associated proteins might help stabilize positioning of ribosome-bound tRNAs. In Coxiella burnetii (strain CbuG_Q212) (Coxiella burnetii (strain Q212)), this protein is Large ribosomal subunit protein uL5.